We begin with the raw amino-acid sequence, 762 residues long: Transcription factor kpeA (762 aa).

A disordered region spans residues 267-361 (FDHTSHGSQS…PLKPDQRKQA (95 aa)). Over residues 294–312 (KKPSSPTRSTGSSSSTSPP) the composition is skewed to low complexity. Residues 370-401 (CLRCKFLKKTCDKGEPCAGCQPSHARLWQVPC) constitute a DNA-binding region (zn(2)-C6 fungal-type).

Its subcellular location is the nucleus. Its function is as follows. Transcription factor that regulates conidiation as well as kojic acid production, likely by negatively controlling kojR and kojA expression. The polypeptide is Transcription factor kpeA (Aspergillus oryzae (strain ATCC 42149 / RIB 40) (Yellow koji mold)).